Reading from the N-terminus, the 70-residue chain is Translational regulator CsrA (70 aa).

This sequence belongs to the CsrA/RsmA family. In terms of assembly, homodimer; the beta-strands of each monomer intercalate to form a hydrophobic core, while the alpha-helices form wings that extend away from the core.

The protein localises to the cytoplasm. In terms of biological role, a translational regulator that binds mRNA to regulate translation initiation and/or mRNA stability. Usually binds in the 5'-UTR at or near the Shine-Dalgarno sequence preventing ribosome-binding, thus repressing translation. Its main target seems to be the major flagellin gene, while its function is anatagonized by FliW. The chain is Translational regulator CsrA from Rhodopirellula baltica (strain DSM 10527 / NCIMB 13988 / SH1).